We begin with the raw amino-acid sequence, 536 residues long: CTP synthase (536 aa).

Residues 1–268 (MSFKSIFLTG…VDFLLSKFGF (268 aa)) form an amidoligase domain region. Ser14 contributes to the CTP binding site. Ser14 contacts UTP. 15–20 (SLGKGL) serves as a coordination point for ATP. Residue Tyr55 participates in L-glutamine binding. Asp72 is a binding site for ATP. Residues Asp72 and Glu142 each coordinate Mg(2+). Residues 149–151 (DIE), 188–193 (KTKPTQ), and Lys224 each bind CTP. Residues 188 to 193 (KTKPTQ) and Lys224 contribute to the UTP site. One can recognise a Glutamine amidotransferase type-1 domain in the interval 294-532 (RIGLVGKYLE…LSAALDYSLE (239 aa)). Gly353 contacts L-glutamine. The Nucleophile; for glutamine hydrolysis role is filled by Cys380. Residues 381-384 (LGMQ), Glu404, and Arg460 each bind L-glutamine. Active-site residues include His505 and Glu507.

It belongs to the CTP synthase family. Homotetramer.

It catalyses the reaction UTP + L-glutamine + ATP + H2O = CTP + L-glutamate + ADP + phosphate + 2 H(+). The enzyme catalyses L-glutamine + H2O = L-glutamate + NH4(+). The catalysed reaction is UTP + NH4(+) + ATP = CTP + ADP + phosphate + 2 H(+). It functions in the pathway pyrimidine metabolism; CTP biosynthesis via de novo pathway; CTP from UDP: step 2/2. With respect to regulation, allosterically activated by GTP, when glutamine is the substrate; GTP has no effect on the reaction when ammonia is the substrate. The allosteric effector GTP functions by stabilizing the protein conformation that binds the tetrahedral intermediate(s) formed during glutamine hydrolysis. Inhibited by the product CTP, via allosteric rather than competitive inhibition. In terms of biological role, catalyzes the ATP-dependent amination of UTP to CTP with either L-glutamine or ammonia as the source of nitrogen. Regulates intracellular CTP levels through interactions with the four ribonucleotide triphosphates. The sequence is that of CTP synthase from Chlamydia muridarum (strain MoPn / Nigg).